The following is a 336-amino-acid chain: Pyridoxal 5'-phosphate synthase subunit PdxS (336 aa).

Aspartate 30 is a D-ribose 5-phosphate binding site. Catalysis depends on lysine 87, which acts as the Schiff-base intermediate with D-ribose 5-phosphate. Position 159 (glycine 159) interacts with D-ribose 5-phosphate. Residue arginine 171 coordinates D-glyceraldehyde 3-phosphate. D-ribose 5-phosphate contacts are provided by residues glycine 257 and 278-279; that span reads GS.

It belongs to the PdxS/SNZ family. In the presence of PdxT, forms a dodecamer of heterodimers.

The enzyme catalyses aldehydo-D-ribose 5-phosphate + D-glyceraldehyde 3-phosphate + L-glutamine = pyridoxal 5'-phosphate + L-glutamate + phosphate + 3 H2O + H(+). Its pathway is cofactor biosynthesis; pyridoxal 5'-phosphate biosynthesis. Its function is as follows. Catalyzes the formation of pyridoxal 5'-phosphate from ribose 5-phosphate (RBP), glyceraldehyde 3-phosphate (G3P) and ammonia. The ammonia is provided by the PdxT subunit. Can also use ribulose 5-phosphate and dihydroxyacetone phosphate as substrates, resulting from enzyme-catalyzed isomerization of RBP and G3P, respectively. This is Pyridoxal 5'-phosphate synthase subunit PdxS from Thermoplasma acidophilum (strain ATCC 25905 / DSM 1728 / JCM 9062 / NBRC 15155 / AMRC-C165).